The sequence spans 103 residues: Small ribosomal subunit protein uS10 (103 aa).

This sequence belongs to the universal ribosomal protein uS10 family. As to quaternary structure, part of the 30S ribosomal subunit.

Functionally, involved in the binding of tRNA to the ribosomes. This is Small ribosomal subunit protein uS10 from Aromatoleum aromaticum (strain DSM 19018 / LMG 30748 / EbN1) (Azoarcus sp. (strain EbN1)).